The primary structure comprises 170 residues: Siroheme decarboxylase NirL subunit (170 aa).

It belongs to the Ahb/Nir family. As to quaternary structure, probably forms a complex composed of NirD, NirL, NirG and NirH. All proteins are required for the total conversion of siroheme to didecarboxysiroheme.

The enzyme catalyses siroheme + 2 H(+) = 12,18-didecarboxysiroheme + 2 CO2. It functions in the pathway porphyrin-containing compound metabolism. Involved in heme d1 biosynthesis. Catalyzes the decarboxylation of siroheme into didecarboxysiroheme. The chain is Siroheme decarboxylase NirL subunit from Stutzerimonas stutzeri (Pseudomonas stutzeri).